The following is a 490-amino-acid chain: Cytochrome P450 2C19 (490 aa).

C435 contributes to the heme binding site.

This sequence belongs to the cytochrome P450 family. Heme is required as a cofactor.

The protein localises to the endoplasmic reticulum membrane. It is found in the microsome membrane. The enzyme catalyses an organic molecule + reduced [NADPH--hemoprotein reductase] + O2 = an alcohol + oxidized [NADPH--hemoprotein reductase] + H2O + H(+). It carries out the reaction (5Z,8Z,11Z)-eicosatrienoate + reduced [NADPH--hemoprotein reductase] + O2 = 19-hydroxy-(5Z,8Z,11Z)-eicosatrienoate + oxidized [NADPH--hemoprotein reductase] + H2O + H(+). It catalyses the reaction (5Z,8Z,11Z,14Z)-eicosatetraenoate + reduced [NADPH--hemoprotein reductase] + O2 = 19-hydroxy-(5Z,8Z,11Z,14Z)-eicosatetraenoate + oxidized [NADPH--hemoprotein reductase] + H2O + H(+). The catalysed reaction is (5Z,8Z,11Z,14Z,17Z)-eicosapentaenoate + reduced [NADPH--hemoprotein reductase] + O2 = 19-hydroxy-(5Z,8Z,11Z,14Z,17Z)-eicosapentaenoate + oxidized [NADPH--hemoprotein reductase] + H2O + H(+). The enzyme catalyses (4Z,7Z,10Z,13Z,16Z,19Z)-docosahexaenoate + reduced [NADPH--hemoprotein reductase] + O2 = 21-hydroxy-(4Z,7Z,10Z,13Z,16Z,19Z)-docosahexaenoate + oxidized [NADPH--hemoprotein reductase] + H2O + H(+). It carries out the reaction (5Z,8Z,11Z,14Z)-eicosatetraenoate + reduced [NADPH--hemoprotein reductase] + O2 = (8R,9S)-epoxy-(5Z,11Z,14Z)-eicosatrienoate + oxidized [NADPH--hemoprotein reductase] + H2O + H(+). It catalyses the reaction (5Z,8Z,11Z,14Z)-eicosatetraenoate + reduced [NADPH--hemoprotein reductase] + O2 = (11R,12S)-epoxy-(5Z,8Z,14Z)-eicosatrienoate + oxidized [NADPH--hemoprotein reductase] + H2O + H(+). The catalysed reaction is (5Z,8Z,11Z,14Z)-eicosatetraenoate + reduced [NADPH--hemoprotein reductase] + O2 = (11S,12R)-epoxy-(5Z,8Z,14Z)-eicosatrienoate + oxidized [NADPH--hemoprotein reductase] + H2O + H(+). The enzyme catalyses (5Z,8Z,11Z,14Z)-eicosatetraenoate + reduced [NADPH--hemoprotein reductase] + O2 = (14R,15S)-epoxy-(5Z,8Z,11Z)-eicosatrienoate + oxidized [NADPH--hemoprotein reductase] + H2O + H(+). It carries out the reaction (5Z,8Z,11Z,14Z,17Z)-eicosapentaenoate + reduced [NADPH--hemoprotein reductase] + O2 = (17R,18S)-epoxy-(5Z,8Z,11Z,14Z)-eicosatetraenoate + oxidized [NADPH--hemoprotein reductase] + H2O + H(+). It catalyses the reaction (4Z,7Z,10Z,13Z,16Z,19Z)-docosahexaenoate + reduced [NADPH--hemoprotein reductase] + O2 = (19R,20S)-epoxy-(4Z,7Z,10Z,13Z,16Z)-docosapentaenoate + oxidized [NADPH--hemoprotein reductase] + H2O + H(+). The catalysed reaction is (4Z,7Z,10Z,13Z,16Z,19Z)-docosahexaenoate + reduced [NADPH--hemoprotein reductase] + O2 = (19S,20R)-epoxy-(4Z,7Z,10Z,13Z,16Z)-docosapentaenoate + oxidized [NADPH--hemoprotein reductase] + H2O + H(+). The enzyme catalyses (4R)-limonene + reduced [NADPH--hemoprotein reductase] + O2 = (1R,5S)-carveol + oxidized [NADPH--hemoprotein reductase] + H2O + H(+). It carries out the reaction (4S)-limonene + reduced [NADPH--hemoprotein reductase] + O2 = (1S,5R)-carveol + oxidized [NADPH--hemoprotein reductase] + H2O + H(+). It catalyses the reaction (4S)-limonene + reduced [NADPH--hemoprotein reductase] + O2 = (4S)-perillyl alcohol + oxidized [NADPH--hemoprotein reductase] + H2O + H(+). The catalysed reaction is fenbendazole + reduced [NADPH--hemoprotein reductase] + O2 = 4'-hydroxyfenbendazole + oxidized [NADPH--hemoprotein reductase] + H2O + H(+). The protein operates within lipid metabolism; fatty acid metabolism. Its pathway is terpene metabolism; (4R)-limonene degradation. Functionally, a cytochrome P450 monooxygenase involved in the metabolism of polyunsaturated fatty acids (PUFA). Mechanistically, uses molecular oxygen inserting one oxygen atom into a substrate, and reducing the second into a water molecule, with two electrons provided by NADPH via cytochrome P450 reductase (NADPH--hemoprotein reductase). Catalyzes the hydroxylation of carbon-hydrogen bonds. Hydroxylates PUFA specifically at the omega-1 position. Catalyzes the epoxidation of double bonds of PUFA. Also metabolizes plant monoterpenes such as limonene. Oxygenates (R)- and (S)-limonene to produce carveol and perillyl alcohol. Responsible for the metabolism of a number of therapeutic agents such as the anticonvulsant drug S-mephenytoin, omeprazole, proguanil, certain barbiturates, diazepam, propranolol, citalopram and imipramine. Hydroxylates fenbendazole at the 4' position. The polypeptide is Cytochrome P450 2C19 (CYP2C19) (Homo sapiens (Human)).